The sequence spans 929 residues: Lon protease homolog 2, peroxisomal (929 aa).

The 247-residue stretch at 11-257 (LPLVPLPKGS…RVVEILTRQL (247 aa)) folds into the Lon N-terminal domain. The disordered stretch occupies residues 302–325 (GLTPPGLSAGRNNDNDDKESNEVD). 484–491 (GPPGVGKT) lines the ATP pocket. Residues 727–914 (HGRPGVVTGL…WEAIRQVWPD (188 aa)) form the Lon proteolytic domain. Residues Ser-820 and Lys-863 contribute to the active site. Residues 927–929 (SRL) carry the Microbody targeting signal motif.

The protein belongs to the peptidase S16 family.

Its subcellular location is the peroxisome matrix. The enzyme catalyses Hydrolysis of proteins in presence of ATP.. In terms of biological role, ATP-dependent serine protease that mediates the selective degradation of misfolded and unassembled polypeptides in the peroxisomal matrix. Necessary for type 2 peroxisome targeting signal (PTS2)-containing protein processing and facilitates peroxisome matrix protein import. The polypeptide is Lon protease homolog 2, peroxisomal (Aspergillus niger (strain ATCC MYA-4892 / CBS 513.88 / FGSC A1513)).